The following is a 400-amino-acid chain: Elongation factor Tu (400 aa).

Residues 10–210 (KPHVNVGTIG…ALDSYIPEPV (201 aa)) form the tr-type G domain. Residues 19–26 (GHVDHGKT) form a G1 region. 19 to 26 (GHVDHGKT) provides a ligand contact to GTP. Residue Thr26 participates in Mg(2+) binding. The interval 66-70 (ILTIA) is G2. The segment at 87-90 (DCPG) is G3. GTP-binding positions include 87–91 (DCPGH) and 142–145 (NKCD). A G4 region spans residues 142-145 (NKCD). Residues 180-182 (SAI) form a G5 region.

The protein belongs to the TRAFAC class translation factor GTPase superfamily. Classic translation factor GTPase family. EF-Tu/EF-1A subfamily. As to quaternary structure, monomer.

Its subcellular location is the cytoplasm. The catalysed reaction is GTP + H2O = GDP + phosphate + H(+). GTP hydrolase that promotes the GTP-dependent binding of aminoacyl-tRNA to the A-site of ribosomes during protein biosynthesis. The chain is Elongation factor Tu from Gemmatimonas aurantiaca (strain DSM 14586 / JCM 11422 / NBRC 100505 / T-27).